Consider the following 89-residue polypeptide: UPF0335 protein RPC_3979 (89 aa).

Belongs to the UPF0335 family.

The chain is UPF0335 protein RPC_3979 from Rhodopseudomonas palustris (strain BisB18).